Here is a 243-residue protein sequence, read N- to C-terminus: uncharacterized protein (243 aa).

In terms of domain architecture, VWFA spans 26–204 (RVGLVLDITG…ISDDELYDAL (179 aa)). The tract at residues 222–243 (REQEPPAEKPKKKGFFSRLFSK) is disordered. Residues 231–243 (PKKKGFFSRLFSK) show a composition bias toward basic residues.

This is an uncharacterized protein from Bacillus subtilis (strain 168).